The sequence spans 260 residues: Acetylglutamate kinase (260 aa).

Substrate is bound by residues 46–47, Arg68, and Asn160; that span reads GG.

The protein belongs to the acetylglutamate kinase family. ArgB subfamily.

It is found in the cytoplasm. It carries out the reaction N-acetyl-L-glutamate + ATP = N-acetyl-L-glutamyl 5-phosphate + ADP. The protein operates within amino-acid biosynthesis; L-arginine biosynthesis; N(2)-acetyl-L-ornithine from L-glutamate: step 2/4. Catalyzes the ATP-dependent phosphorylation of N-acetyl-L-glutamate. This is Acetylglutamate kinase from Shewanella putrefaciens (strain CN-32 / ATCC BAA-453).